Reading from the N-terminus, the 417-residue chain is Queuine tRNA-ribosyltransferase accessory subunit 2 (417 aa).

Residues Cys-324, Cys-326, Cys-329, and His-355 each coordinate Zn(2+).

The protein belongs to the queuine tRNA-ribosyltransferase family. QTRT2 subfamily. In terms of assembly, heterodimer of a catalytic subunit and an accessory subunit. Requires Zn(2+) as cofactor.

The protein localises to the cytoplasm. Functionally, non-catalytic subunit of the queuine tRNA-ribosyltransferase (TGT) that catalyzes the base-exchange of a guanine (G) residue with queuine (Q) at position 34 (anticodon wobble position) in tRNAs with GU(N) anticodons (tRNA-Asp, -Asn, -His and -Tyr), resulting in the hypermodified nucleoside queuosine (7-(((4,5-cis-dihydroxy-2-cyclopenten-1-yl)amino)methyl)-7-deazaguanosine). The polypeptide is Queuine tRNA-ribosyltransferase accessory subunit 2 (Drosophila persimilis (Fruit fly)).